The sequence spans 168 residues: Plasma membrane-associated cation-binding protein 2 (168 aa).

Residue glycine 2 is the site of N-myristoyl glycine attachment. Tandem repeats lie at residues valine 26–lysine 30, valine 69–lysine 73, valine 94–lysine 99, valine 103–lysine 107, valine 110–lysine 115, valine 118–lysine 122, and valine 124–lysine 129. Residues valine 26 to lysine 129 are 7 X 5 AA approximate repeats of V-E-E-K-K. Residues glutamate 56–lysine 77 adopt a coiled-coil conformation. The span at glutamate 88–valine 131 shows a compositional bias: basic and acidic residues. The segment at glutamate 88–alanine 168 is disordered. A compositionally biased stretch (low complexity) spans glutamate 152 to alanine 168.

It belongs to the DREPP family. Binds microtubules. Interacts with calcium ion Ca(2+), calmodulin and some phosphatidylinositol phosphates (PtdInsPs) such as phosphatidylinositol 3,5-bisphosphate [PtdIns(3,5)P(2)], PtdIns(4,5)P(2) and PtdIns(3,4,5)P(3). Cu(2+) is required as a cofactor. As to expression, mostly expressed in the expanding cells, specifically in roots (except in root tips) and flowers (at protein level). Also detected in cotyledons, hypocotyls and trichome stalks.

It is found in the cell membrane. It localises to the cytoplasm. The protein resides in the cytoskeleton. In terms of biological role, may be involved in intracellular signaling through interaction with PtdInsPs and calmodulin (CaM); may keep PtdInsPs attached to the plasma membrane until Ca(2+)-CaM reaches a competitive concentration subsequent to an increase triggered by a stimulus, thus leading to PtdInsPs release and subsequent activation of InsPs-dependent signaling cascade. Binds to microtubules and inhibits tubulin polymerization. Regulates directional cell growth and cortical microtubule organization by destabilizing microtubules (e.g. in cotyledon pavement cells). The sequence is that of Plasma membrane-associated cation-binding protein 2 from Arabidopsis thaliana (Mouse-ear cress).